The following is a 385-amino-acid chain: 1-deoxy-D-xylulose 5-phosphate reductoisomerase (385 aa).

Residues threonine 10, glycine 11, serine 12, isoleucine 13, lysine 37, and asparagine 124 each contribute to the NADPH site. Lysine 125 is a binding site for 1-deoxy-D-xylulose 5-phosphate. Glutamate 126 lines the NADPH pocket. Aspartate 150 is a binding site for Mn(2+). Residues serine 151, glutamate 152, serine 176, and histidine 199 each coordinate 1-deoxy-D-xylulose 5-phosphate. Glutamate 152 contributes to the Mn(2+) binding site. Glycine 205 serves as a coordination point for NADPH. Residues serine 212, asparagine 217, lysine 218, and glutamate 221 each contribute to the 1-deoxy-D-xylulose 5-phosphate site. Position 221 (glutamate 221) interacts with Mn(2+).

It belongs to the DXR family. Requires Mg(2+) as cofactor. The cofactor is Mn(2+).

The enzyme catalyses 2-C-methyl-D-erythritol 4-phosphate + NADP(+) = 1-deoxy-D-xylulose 5-phosphate + NADPH + H(+). Its pathway is isoprenoid biosynthesis; isopentenyl diphosphate biosynthesis via DXP pathway; isopentenyl diphosphate from 1-deoxy-D-xylulose 5-phosphate: step 1/6. In terms of biological role, catalyzes the NADPH-dependent rearrangement and reduction of 1-deoxy-D-xylulose-5-phosphate (DXP) to 2-C-methyl-D-erythritol 4-phosphate (MEP). This is 1-deoxy-D-xylulose 5-phosphate reductoisomerase from Clostridium botulinum (strain 657 / Type Ba4).